The primary structure comprises 437 residues: Enolase (437 aa).

Gln163 provides a ligand contact to (2R)-2-phosphoglycerate. Glu205 (proton donor) is an active-site residue. 3 residues coordinate Mg(2+): Asp242, Glu285, and Asp312. Positions 337, 366, 367, and 388 each coordinate (2R)-2-phosphoglycerate. The active-site Proton acceptor is Lys337.

This sequence belongs to the enolase family. It depends on Mg(2+) as a cofactor.

It localises to the cytoplasm. The protein resides in the secreted. It is found in the cell surface. The enzyme catalyses (2R)-2-phosphoglycerate = phosphoenolpyruvate + H2O. The protein operates within carbohydrate degradation; glycolysis; pyruvate from D-glyceraldehyde 3-phosphate: step 4/5. Its function is as follows. Catalyzes the reversible conversion of 2-phosphoglycerate (2-PG) into phosphoenolpyruvate (PEP). It is essential for the degradation of carbohydrates via glycolysis. This chain is Enolase, found in Nitratidesulfovibrio vulgaris (strain DP4) (Desulfovibrio vulgaris).